A 394-amino-acid chain; its full sequence is Phosphopentomutase (394 aa).

6 residues coordinate Mn(2+): D13, D286, H291, D327, H328, and H339.

It belongs to the phosphopentomutase family. Requires Mn(2+) as cofactor.

The protein resides in the cytoplasm. It catalyses the reaction 2-deoxy-alpha-D-ribose 1-phosphate = 2-deoxy-D-ribose 5-phosphate. The catalysed reaction is alpha-D-ribose 1-phosphate = D-ribose 5-phosphate. It functions in the pathway carbohydrate degradation; 2-deoxy-D-ribose 1-phosphate degradation; D-glyceraldehyde 3-phosphate and acetaldehyde from 2-deoxy-alpha-D-ribose 1-phosphate: step 1/2. In terms of biological role, isomerase that catalyzes the conversion of deoxy-ribose 1-phosphate (dRib-1-P) and ribose 1-phosphate (Rib-1-P) to deoxy-ribose 5-phosphate (dRib-5-P) and ribose 5-phosphate (Rib-5-P), respectively. The chain is Phosphopentomutase from Bacillus anthracis (strain A0248).